The following is a 303-amino-acid chain: Thioesterase poxG (303 aa).

The protein belongs to the lcsJ thioesterase family.

It participates in secondary metabolite biosynthesis. Its function is as follows. Thioesterase; part of the gene cluster that mediates the biosynthesis of oxaleimides, cytotoxic compounds containing an unusual disubstituted succinimide moiety. The first step of the pathway is provided by the HR-PKS poxF that serves in a new mode of collaborative biosynthesis with the PKS-NRPS poxE, by providing the olefin containing amino acid substrate via the synthesis of an ACP-bound dec-4-enoate. The cytochrome P450 monooxygenase poxM-catalyzed oxidation at the alpha-position creates the enzyme-bound 2-hydroxydec-4-enoyl-ACP thioester, which may be prone to spontaneous hydrolysis to yield 2-hydroxydec-4-enoic acid due to increased electrophilicity of the carbonyl. 2-hydroxydec-4-enoic acid can then be further oxidized by poxM to yield the alpha-ketoacid 2-oxodec-4-enoicacid, which is reductively aminated by the aminotransferase poxL to yield (S,E)-2-aminodec-4-enoic acid. The Hybrid PKS-NRPS synthetase poxE then performs condensation between the octaketide product of its PKS modules and the amino group of (S,E)-2-aminodec-4-enoic acid which is activated and incorporated by the adenylation domain. The resulting aminoacyl product can be cyclized by the Diels-Alderase PoxQ and reductively released by the reductive (R) domain of poxE to yield an aldehyde intermediate. The released aldehyde is then substrate for a Knoevenagel condensation by the hydrolyase poxO followed by an oxidation at the 5-position of the pyrrolidone ring. The presence of the olefin from the amino acid building block allows for migration of the substituted allyl group to occur. This allylic transposition reaction takes place in a conjugate addition, semipinacol-like fashion to yield a succinimide intermediate. Iterative two-electron oxidations of the C7 methyl of the succinimide intermediate to the carboxylic acid can be catalyzed by one of two remaining cytochrome P450 monooxygenasess poxC or poxD to yield oxaleimide A. Subsequent oxidation yields the maleimide scaffold oxaleimide I. Both oxaleimide A and oxaleimide I can undergo oxidative modifications in the decalin ring to yield the series of products oxaleimides B to H. This chain is Thioesterase poxG, found in Penicillium oxalicum (strain 114-2 / CGMCC 5302) (Penicillium decumbens).